We begin with the raw amino-acid sequence, 377 residues long: Chaperone protein DnaJ (377 aa).

Positions 5–70 constitute a J domain; that stretch reads DYYELLGLQK…EKKAKYDQFG (66 aa). The CR-type zinc finger occupies 137–219; sequence GVEKEISVTR…CRGKGSVRKT (83 aa). The Zn(2+) site is built by Cys150, Cys153, Cys167, Cys170, Cys193, Cys196, Cys207, and Cys210. 4 CXXCXGXG motif repeats span residues 150–157, 167–174, 193–200, and 207–214; these read CEHCHGSG, CPTCSGSG, CDTCRGTG, and CSECRGKG.

Belongs to the DnaJ family. As to quaternary structure, homodimer. Zn(2+) serves as cofactor.

Its subcellular location is the cytoplasm. In terms of biological role, participates actively in the response to hyperosmotic and heat shock by preventing the aggregation of stress-denatured proteins and by disaggregating proteins, also in an autonomous, DnaK-independent fashion. Unfolded proteins bind initially to DnaJ; upon interaction with the DnaJ-bound protein, DnaK hydrolyzes its bound ATP, resulting in the formation of a stable complex. GrpE releases ADP from DnaK; ATP binding to DnaK triggers the release of the substrate protein, thus completing the reaction cycle. Several rounds of ATP-dependent interactions between DnaJ, DnaK and GrpE are required for fully efficient folding. Also involved, together with DnaK and GrpE, in the DNA replication of plasmids through activation of initiation proteins. The polypeptide is Chaperone protein DnaJ (Clostridium beijerinckii (strain ATCC 51743 / NCIMB 8052) (Clostridium acetobutylicum)).